Reading from the N-terminus, the 590-residue chain is DNA primase (590 aa).

The segment at 37–61 (CPFHTEKTPSFIVNPAGAHYHCFGC) adopts a CHC2-type zinc-finger fold. Residues 253–333 (KKVILVEGQA…QMSVFVCKLP (81 aa)) enclose the Toprim domain. 3 residues coordinate Mg(2+): E259, D304, and D306.

It belongs to the DnaG primase family. As to quaternary structure, monomer. Interacts with DnaB. Zn(2+) is required as a cofactor. The cofactor is Mg(2+).

The catalysed reaction is ssDNA + n NTP = ssDNA/pppN(pN)n-1 hybrid + (n-1) diphosphate.. In terms of biological role, RNA polymerase that catalyzes the synthesis of short RNA molecules used as primers for DNA polymerase during DNA replication. This is DNA primase from Chlamydia pneumoniae (Chlamydophila pneumoniae).